The following is a 203-amino-acid chain: Glycerol-3-phosphate acyltransferase (203 aa).

The next 4 membrane-spanning stretches (helical) occupy residues 6-26 (LTLL…AVLV), 82-102 (AISL…PIFF), 118-138 (APIG…LLLI), and 141-161 (YSSL…WWLD).

It belongs to the PlsY family. As to quaternary structure, probably interacts with PlsX.

It localises to the cell inner membrane. It catalyses the reaction an acyl phosphate + sn-glycerol 3-phosphate = a 1-acyl-sn-glycero-3-phosphate + phosphate. Its pathway is lipid metabolism; phospholipid metabolism. Functionally, catalyzes the transfer of an acyl group from acyl-phosphate (acyl-PO(4)) to glycerol-3-phosphate (G3P) to form lysophosphatidic acid (LPA). This enzyme utilizes acyl-phosphate as fatty acyl donor, but not acyl-CoA or acyl-ACP. The sequence is that of Glycerol-3-phosphate acyltransferase from Shewanella putrefaciens (strain CN-32 / ATCC BAA-453).